Reading from the N-terminus, the 375-residue chain is N5-carboxyaminoimidazole ribonucleotide synthase (375 aa).

ATP-binding positions include arginine 108, lysine 148, 153–159 (GYDGKGQ), 183–186 (EQYL), glutamate 191, histidine 214, and 266–267 (NE). The region spanning 112 to 296 (KQTLLEANTQ…QFDTHILAIT (185 aa)) is the ATP-grasp domain.

The protein belongs to the PurK/PurT family. In terms of assembly, homodimer.

The enzyme catalyses 5-amino-1-(5-phospho-beta-D-ribosyl)imidazole + hydrogencarbonate + ATP = 5-carboxyamino-1-(5-phospho-D-ribosyl)imidazole + ADP + phosphate + 2 H(+). Its pathway is purine metabolism; IMP biosynthesis via de novo pathway; 5-amino-1-(5-phospho-D-ribosyl)imidazole-4-carboxylate from 5-amino-1-(5-phospho-D-ribosyl)imidazole (N5-CAIR route): step 1/2. In terms of biological role, catalyzes the ATP-dependent conversion of 5-aminoimidazole ribonucleotide (AIR) and HCO(3)(-) to N5-carboxyaminoimidazole ribonucleotide (N5-CAIR). The polypeptide is N5-carboxyaminoimidazole ribonucleotide synthase (Staphylococcus epidermidis (strain ATCC 12228 / FDA PCI 1200)).